A 561-amino-acid polypeptide reads, in one-letter code: Dihydroxy-acid dehydratase (561 aa).

Cys50 contacts [2Fe-2S] cluster. Asp82 contacts Mg(2+). Cys123 provides a ligand contact to [2Fe-2S] cluster. Asp124 and Lys125 together coordinate Mg(2+). Lys125 is modified (N6-carboxylysine). Cys195 serves as a coordination point for [2Fe-2S] cluster. Glu447 provides a ligand contact to Mg(2+). Ser473 functions as the Proton acceptor in the catalytic mechanism.

Belongs to the IlvD/Edd family. As to quaternary structure, homodimer. It depends on [2Fe-2S] cluster as a cofactor. The cofactor is Mg(2+).

It carries out the reaction (2R)-2,3-dihydroxy-3-methylbutanoate = 3-methyl-2-oxobutanoate + H2O. The enzyme catalyses (2R,3R)-2,3-dihydroxy-3-methylpentanoate = (S)-3-methyl-2-oxopentanoate + H2O. It functions in the pathway amino-acid biosynthesis; L-isoleucine biosynthesis; L-isoleucine from 2-oxobutanoate: step 3/4. Its pathway is amino-acid biosynthesis; L-valine biosynthesis; L-valine from pyruvate: step 3/4. In terms of biological role, functions in the biosynthesis of branched-chain amino acids. Catalyzes the dehydration of (2R,3R)-2,3-dihydroxy-3-methylpentanoate (2,3-dihydroxy-3-methylvalerate) into 2-oxo-3-methylpentanoate (2-oxo-3-methylvalerate) and of (2R)-2,3-dihydroxy-3-methylbutanoate (2,3-dihydroxyisovalerate) into 2-oxo-3-methylbutanoate (2-oxoisovalerate), the penultimate precursor to L-isoleucine and L-valine, respectively. The polypeptide is Dihydroxy-acid dehydratase (Microcystis aeruginosa (strain NIES-843 / IAM M-2473)).